Reading from the N-terminus, the 172-residue chain is Translationally-controlled tumor protein (172 aa).

A TCTP domain is found at 1 to 172 (MIIYRDLISH…FKDGLEMEKC (172 aa)). Ser-46 is subject to Phosphoserine; by PLK1. Ser-53 carries the post-translational modification Phosphoserine. Residue Ser-64 is modified to Phosphoserine; by PLK1. Positions 70–172 (VDIVMNHHLQ…FKDGLEMEKC (103 aa)) are required for reduction of TSC22D1 protein stability.

This sequence belongs to the TCTP family. In terms of assembly, homodimer. Interacts with STEAP3. Interacts with TSC22D1; interaction results in the destabilization of TSC22D1 protein.

It is found in the cytoplasm. Functionally, involved in calcium binding and microtubule stabilization. Acts as a negative regulator of TSC22D1-mediated apoptosis, via interaction with and destabilization of TSC22D1 protein. The sequence is that of Translationally-controlled tumor protein (TPT1) from Bos taurus (Bovine).